The sequence spans 342 residues: Protein-glutamate methylesterase/protein-glutamine glutaminase 1 (342 aa).

A Response regulatory domain is found at 3 to 121 (RVLVIDDSLF…NIREIGGELK (119 aa)). A 4-aspartylphosphate modification is found at Asp54. The 200-residue stretch at 141-340 (DSNARNVVLI…EKIVETIRAM (200 aa)) folds into the CheB-type methylesterase domain. Catalysis depends on residues Ser153, His180, and Asp282.

This sequence belongs to the CheB family. Phosphorylated by CheA. Phosphorylation of the N-terminal regulatory domain activates the methylesterase activity.

The protein localises to the cytoplasm. The enzyme catalyses [protein]-L-glutamate 5-O-methyl ester + H2O = L-glutamyl-[protein] + methanol + H(+). The catalysed reaction is L-glutaminyl-[protein] + H2O = L-glutamyl-[protein] + NH4(+). Its function is as follows. Involved in chemotaxis. Part of a chemotaxis signal transduction system that modulates chemotaxis in response to various stimuli. Catalyzes the demethylation of specific methylglutamate residues introduced into the chemoreceptors (methyl-accepting chemotaxis proteins or MCP) by CheR. Also mediates the irreversible deamidation of specific glutamine residues to glutamic acid. This chain is Protein-glutamate methylesterase/protein-glutamine glutaminase 1, found in Methanospirillum hungatei JF-1 (strain ATCC 27890 / DSM 864 / NBRC 100397 / JF-1).